An 89-amino-acid chain; its full sequence is Small ribosomal subunit protein uS15 (89 aa).

This sequence belongs to the universal ribosomal protein uS15 family. As to quaternary structure, part of the 30S ribosomal subunit. Forms a bridge to the 50S subunit in the 70S ribosome, contacting the 23S rRNA.

Its function is as follows. One of the primary rRNA binding proteins, it binds directly to 16S rRNA where it helps nucleate assembly of the platform of the 30S subunit by binding and bridging several RNA helices of the 16S rRNA. Forms an intersubunit bridge (bridge B4) with the 23S rRNA of the 50S subunit in the ribosome. In Bifidobacterium animalis subsp. lactis (strain AD011), this protein is Small ribosomal subunit protein uS15.